Here is a 395-residue protein sequence, read N- to C-terminus: Acetate kinase (395 aa).

Asn-8 is a Mg(2+) binding site. Lys-15 is an ATP binding site. Position 89 (Arg-89) interacts with substrate. The active-site Proton donor/acceptor is the Asp-146. ATP is bound by residues 206-210 (HLGNG), 281-283 (DLR), and 329-333 (GIGEN). Position 382 (Glu-382) interacts with Mg(2+).

This sequence belongs to the acetokinase family. In terms of assembly, homodimer. The cofactor is Mg(2+). Mn(2+) serves as cofactor.

It is found in the cytoplasm. The enzyme catalyses acetate + ATP = acetyl phosphate + ADP. Its pathway is metabolic intermediate biosynthesis; acetyl-CoA biosynthesis; acetyl-CoA from acetate: step 1/2. Functionally, catalyzes the formation of acetyl phosphate from acetate and ATP. Can also catalyze the reverse reaction. This chain is Acetate kinase, found in Shouchella clausii (strain KSM-K16) (Alkalihalobacillus clausii).